Consider the following 296-residue polypeptide: dTDP-4-dehydrorhamnose reductase (296 aa).

Residues 10 to 12 (GQI), 35 to 36 (DL), and 59 to 61 (AYT) contribute to the NADH site. Residues 11–12 (QI), 35–36 (DL), and 59–61 (AYT) contribute to the NADPH site. 100–101 (TD) provides a ligand contact to dTDP-beta-L-rhamnose. Residues Y124 and K128 each coordinate NADH. NADPH-binding residues include Y124 and K128. The active-site Proton donor/acceptor is the Y124. W149 is a binding site for dTDP-beta-L-rhamnose.

This sequence belongs to the dTDP-4-dehydrorhamnose reductase family. In terms of assembly, homodimer. Requires Mg(2+) as cofactor.

The enzyme catalyses dTDP-beta-L-rhamnose + NADP(+) = dTDP-4-dehydro-beta-L-rhamnose + NADPH + H(+). The protein operates within carbohydrate biosynthesis; dTDP-L-rhamnose biosynthesis. In terms of biological role, involved in the biosynthesis of the dTDP-L-rhamnose which is an important component of lipopolysaccharide (LPS). Catalyzes the reduction of dTDP-6-deoxy-L-lyxo-4-hexulose to yield dTDP-L-rhamnose. RmlD uses NADH and NADPH nearly equally well. In Sinorhizobium fredii (strain NBRC 101917 / NGR234), this protein is dTDP-4-dehydrorhamnose reductase.